A 527-amino-acid polypeptide reads, in one-letter code: MHDKILILDFGSQVTQLIARRVREANVYSEIHPYDVDASFIRDFAPKGVILSGGPSSVTETDTPRVPQAVFELGVPVLGICYGMQAMAEQLGGKVDIGHLREFGYAEVRARNHTSLLEGIKDFTTPEGHGMLKVWMSHGDKVLEMPPGFALMASTESCPIAAMADEKRHFYGLQWHPEVTHTVQGRAMLERFVLQICGARADWEMGNYIDEAVAKIREQVGNEHVILGLSGGVDSSVAAALLHRAIGDQLTCVFVDHGLLRLNEAEQVMATFADHLGVKVIHVDASEVFLRKLAGVTDPEAKRKIIGAEFVEVFQAEAGRLTDAKWLAQGTIYPDVIESAGKGKKGAQTIKSHHNVGGLPETLNLKLLEPLRELFKDEVRELGVKLGLPPAMVYRHPFPGPGLGVRILGEVKRDFADLLRRADAIFIETLRTFIDKETGKSWYDLTSQAFAVFLPVKSVGVMGDGRTYEYVVALRAVQTLDFMTAHWAHLPHELLGHVSNRIINEVRGINRVVYDISGKPPATIEWE.

Positions 4–202 (KILILDFGSQ…VLQICGARAD (199 aa)) constitute a Glutamine amidotransferase type-1 domain. Cys81 acts as the Nucleophile in catalysis. Active-site residues include His176 and Glu178. One can recognise a GMPS ATP-PPase domain in the interval 203–395 (WEMGNYIDEA…LGLPPAMVYR (193 aa)). Residue 230-236 (SGGVDSS) coordinates ATP.

Homodimer.

The enzyme catalyses XMP + L-glutamine + ATP + H2O = GMP + L-glutamate + AMP + diphosphate + 2 H(+). It functions in the pathway purine metabolism; GMP biosynthesis; GMP from XMP (L-Gln route): step 1/1. Catalyzes the synthesis of GMP from XMP. The protein is GMP synthase [glutamine-hydrolyzing] of Paraburkholderia phytofirmans (strain DSM 17436 / LMG 22146 / PsJN) (Burkholderia phytofirmans).